Here is a 160-residue protein sequence, read N- to C-terminus: Transcription elongation factor GreA (160 aa).

A coiled-coil region spans residues 1–72; the sequence is MAEKTYPMTL…QISSLETKIR (72 aa).

This sequence belongs to the GreA/GreB family.

Its function is as follows. Necessary for efficient RNA polymerase transcription elongation past template-encoded arresting sites. The arresting sites in DNA have the property of trapping a certain fraction of elongating RNA polymerases that pass through, resulting in locked ternary complexes. Cleavage of the nascent transcript by cleavage factors such as GreA or GreB allows the resumption of elongation from the new 3'terminus. GreA releases sequences of 2 to 3 nucleotides. This Streptococcus gordonii (strain Challis / ATCC 35105 / BCRC 15272 / CH1 / DL1 / V288) protein is Transcription elongation factor GreA.